The following is a 317-amino-acid chain: tRNA pseudouridine synthase B (317 aa).

Asp-47 (nucleophile) is an active-site residue.

The protein belongs to the pseudouridine synthase TruB family. Type 1 subfamily.

It carries out the reaction uridine(55) in tRNA = pseudouridine(55) in tRNA. Functionally, responsible for synthesis of pseudouridine from uracil-55 in the psi GC loop of transfer RNAs. The sequence is that of tRNA pseudouridine synthase B from Shewanella sp. (strain MR-7).